Here is a 413-residue protein sequence, read N- to C-terminus: Tyrosine--tRNA ligase 2 (413 aa).

The 'HIGH' region signature appears at 58 to 67 (PSAPDVHLGH). 2 tandem repeats follow at residues 89–94 (GDFTGK) and 96–101 (GDPTGK). Residues 89 to 101 (GDFTGKIGDPTGK) are 2 X 6 AA tandem repeats. Positions 242-246 (KMSKS) match the 'KMSKS' region motif. Lys245 provides a ligand contact to ATP. In terms of domain architecture, S4 RNA-binding spans 353–413 (IAMIDLLVKL…VGKRKFLKLQ (61 aa)).

The protein belongs to the class-I aminoacyl-tRNA synthetase family. TyrS type 2 subfamily. In terms of assembly, homodimer.

It localises to the cytoplasm. The catalysed reaction is tRNA(Tyr) + L-tyrosine + ATP = L-tyrosyl-tRNA(Tyr) + AMP + diphosphate + H(+). Functionally, catalyzes the attachment of tyrosine to tRNA(Tyr) in a two-step reaction: tyrosine is first activated by ATP to form Tyr-AMP and then transferred to the acceptor end of tRNA(Tyr). The polypeptide is Tyrosine--tRNA ligase 2 (Bacillus subtilis (strain 168)).